The primary structure comprises 105 residues: Small ribosomal subunit protein uS10 (105 aa).

Belongs to the universal ribosomal protein uS10 family. Part of the 30S ribosomal subunit.

In terms of biological role, involved in the binding of tRNA to the ribosomes. The polypeptide is Small ribosomal subunit protein uS10 (Lawsonia intracellularis (strain PHE/MN1-00)).